A 124-amino-acid chain; its full sequence is Fluoride-specific ion channel FluC (124 aa).

The next 4 membrane-spanning stretches (helical) occupy residues 6–26, 37–57, 69–89, and 92–112; these read LLIG…SGIV, LAVN…SLFA, TGFC…FVLV, and GLLF…LIMV. G73 and T76 together coordinate Na(+).

This sequence belongs to the fluoride channel Fluc/FEX (TC 1.A.43) family.

It is found in the cell membrane. It catalyses the reaction fluoride(in) = fluoride(out). Its activity is regulated as follows. Na(+) is not transported, but it plays an essential structural role and its presence is essential for fluoride channel function. Functionally, fluoride-specific ion channel. Important for reducing fluoride concentration in the cell, thus reducing its toxicity. The chain is Fluoride-specific ion channel FluC from Methanocaldococcus jannaschii (strain ATCC 43067 / DSM 2661 / JAL-1 / JCM 10045 / NBRC 100440) (Methanococcus jannaschii).